Here is a 759-residue protein sequence, read N- to C-terminus: Phosphoribosylformylglycinamidine synthase subunit PurL (759 aa).

The active site involves H46. Positions 49 and 88 each coordinate ATP. E90 is a Mg(2+) binding site. Substrate contacts are provided by residues 91–94 (SHNH) and R113. H92 serves as the catalytic Proton acceptor. D114 is a binding site for Mg(2+). A substrate-binding site is contributed by Q237. Residue D265 coordinates Mg(2+). Residue 309–311 (ESQ) coordinates substrate. D498 and G535 together coordinate ATP. N536 is a Mg(2+) binding site. S538 lines the substrate pocket.

The protein belongs to the FGAMS family. Monomer. Part of the FGAM synthase complex composed of 1 PurL, 1 PurQ and 2 PurS subunits.

The protein localises to the cytoplasm. The enzyme catalyses N(2)-formyl-N(1)-(5-phospho-beta-D-ribosyl)glycinamide + L-glutamine + ATP + H2O = 2-formamido-N(1)-(5-O-phospho-beta-D-ribosyl)acetamidine + L-glutamate + ADP + phosphate + H(+). Its pathway is purine metabolism; IMP biosynthesis via de novo pathway; 5-amino-1-(5-phospho-D-ribosyl)imidazole from N(2)-formyl-N(1)-(5-phospho-D-ribosyl)glycinamide: step 1/2. Part of the phosphoribosylformylglycinamidine synthase complex involved in the purines biosynthetic pathway. Catalyzes the ATP-dependent conversion of formylglycinamide ribonucleotide (FGAR) and glutamine to yield formylglycinamidine ribonucleotide (FGAM) and glutamate. The FGAM synthase complex is composed of three subunits. PurQ produces an ammonia molecule by converting glutamine to glutamate. PurL transfers the ammonia molecule to FGAR to form FGAM in an ATP-dependent manner. PurS interacts with PurQ and PurL and is thought to assist in the transfer of the ammonia molecule from PurQ to PurL. This is Phosphoribosylformylglycinamidine synthase subunit PurL from Anaeromyxobacter dehalogenans (strain 2CP-C).